Reading from the N-terminus, the 580-residue chain is Probable inositol transporter 2 (580 aa).

The next 12 helical transmembrane spans lie at 36-56, 71-91, 106-126, 129-149, 156-176, 189-209, 275-295, 315-335, 343-363, 452-472, 490-510, and 521-541; these read GIGG…LLYI, EMIV…GGWA, FLFL…LLVV, VFVG…ISEA, GALV…SYLI, WMLG…FTLP, GLIA…NTVM, LLSL…IYFI, LLII…GVFY, FGWF…PGMG, ICGG…AQSF, and WTFL…MVCV.

Belongs to the major facilitator superfamily. Sugar transporter (TC 2.A.1.1) family. Expressed in the tapetum, but not in pollen grains. Detected in leaf vascular tissue and in roots.

It localises to the cell membrane. Inhibited by nickel and to a lesser extent by cobalt. Functionally, plasma membrane inositol-proton symporter. Specific for several inositol epimers, such as myoinositol and scylloinositol. D-chiroinositol, mucoinositol, alloinositol and pinitol are also transported with a lower activity. Not active with galactinol and phytate. This Arabidopsis thaliana (Mouse-ear cress) protein is Probable inositol transporter 2 (INT2).